Consider the following 177-residue polypeptide: MSRVGKAPIALPKGAEVNFAGGLLTVKGPLGTLTQPIHSLVKVNTDNGTITFAPADESREANALQGTMRALTANMVKGVTTGFERKLNLVGVGYRASVQGTALKLQLGFSHDVIHEMPEGVKAETPTQTEIIIKGSDKQKVGQVAAEVRGYRPPEPYKGKGVRYADERVILKETKKK.

The protein belongs to the universal ribosomal protein uL6 family. Part of the 50S ribosomal subunit.

Its function is as follows. This protein binds to the 23S rRNA, and is important in its secondary structure. It is located near the subunit interface in the base of the L7/L12 stalk, and near the tRNA binding site of the peptidyltransferase center. This is Large ribosomal subunit protein uL6 from Ralstonia pickettii (strain 12J).